Consider the following 205-residue polypeptide: Mitochondrial ATP-independent inner membrane protease subunit 2 (205 aa).

Active-site residues include E59 and R104.

Belongs to the peptidase S26 family. IMP1 subfamily. In terms of assembly, heterodimer of 2 subunits, IMP1A/B and IMP12.

The protein resides in the mitochondrion inner membrane. Its function is as follows. Catalyzes the removal of transit peptides required for the targeting of proteins from the mitochondrial matrix, across the inner membrane, into the inter-membrane space. In Arabidopsis thaliana (Mouse-ear cress), this protein is Mitochondrial ATP-independent inner membrane protease subunit 2.